The following is a 327-amino-acid chain: Interleukin-12 subunit beta (327 aa).

The signal sequence occupies residues 1–22 (MHPQQLVVSWFSLVLLASPIVA). In terms of domain architecture, Ig-like C2-type spans 23–106 (IWELEKNVYV…LSRSLLLLHK (84 aa)). The cysteines at positions 50 and 90 are disulfide-linked. N-linked (GlcNAc...) asparagine glycosylation is present at Asn-223. The Fibronectin type-III domain maps to 238-327 (PPKNLQLRPL…WSEWASVSCS (90 aa)).

It belongs to the IL-12B family. Heterodimer with IL12A; disulfide-linked. The heterodimer is known as interleukin IL-12. Heterodimer with IL23A; disulfide-linked. The heterodimer is known as interleukin IL-23. Also secreted as a monomer. Interacts with NBR1; this interaction promotes IL-12 secretion.

The protein resides in the secreted. Its function is as follows. Cytokine that can act as a growth factor for activated T and NK cells, enhance the lytic activity of NK/lymphokine-activated killer cells, and stimulate the production of IFN-gamma by resting PBMC. In terms of biological role, associates with IL23A to form the IL-23 interleukin, a heterodimeric cytokine which functions in innate and adaptive immunity. IL-23 may constitute with IL-17 an acute response to infection in peripheral tissues. IL-23 binds to a heterodimeric receptor complex composed of IL12RB1 and IL23R, activates the Jak-Stat signaling cascade, stimulates memory rather than naive T-cells and promotes production of pro-inflammatory cytokines. IL-23 induces autoimmune inflammation and thus may be responsible for autoimmune inflammatory diseases and may be important for tumorigenesis. The chain is Interleukin-12 subunit beta (IL12B) from Capra hircus (Goat).